We begin with the raw amino-acid sequence, 843 residues long: Protein PLASTID MOVEMENT IMPAIRED 1 (843 aa).

Over residues 30–58 (PQVSVGNRRTNSLALPRSSVPSLVTSADE) the composition is skewed to polar residues. Disordered regions lie at residues 30–65 (PQVS…ARAE) and 88–116 (LEVE…SGVK). Residues 131 to 284 (LVRIGMQKLS…ELALKLGFQI (154 aa)) enclose the C2 NT-type domain. Disordered stretches follow at residues 300–412 (FGMK…GTIG) and 450–472 (MMKD…EEEQ). Positions 307–336 (KPKNFANSFGRKQSKTSFSVPSPKMTSRSE) are enriched in polar residues. Phosphoserine occurs at positions 314 and 328. Residues 365–381 (PEEKPVQKNDKPEQRAE) are compositionally biased toward basic and acidic residues. Residue Thr-404 is modified to Phosphothreonine. A Phosphoserine modification is found at Ser-407. Thr-410 carries the post-translational modification Phosphothreonine. Residues 456 to 472 (DGGDGETESQRLDEEEQ) show a composition bias toward acidic residues. Ser-507 bears the Phosphoserine mark.

As to expression, expressed in leaves, stems, cauline leaves, and flowers but not in roots. Present in leaves in both mesophyll and pavement cells.

Its subcellular location is the cytoplasm. Necessary for chloroplast and nuclear photorelocation movements via the regulation of chloroplast-actin (cp-actin) filaments in mesophyll cells, and together with PMIR1, in pavement cells. Required component for both the low- and high-light-dependent chloroplast movement responses via an abscisic acid (ABA) pathway. Involved in the ABA response pathway during seed germination. Modulates ABA accumulation during periods of water deficit at the seedling stage. This Arabidopsis thaliana (Mouse-ear cress) protein is Protein PLASTID MOVEMENT IMPAIRED 1.